The primary structure comprises 289 residues: Phosphatidylserine decarboxylase proenzyme (289 aa).

Catalysis depends on charge relay system; for autoendoproteolytic cleavage activity residues Asp-89, His-146, and Ser-252. Ser-252 serves as the catalytic Schiff-base intermediate with substrate; via pyruvic acid; for decarboxylase activity. A Pyruvic acid (Ser); by autocatalysis modification is found at Ser-252.

This sequence belongs to the phosphatidylserine decarboxylase family. PSD-B subfamily. Prokaryotic type I sub-subfamily. As to quaternary structure, heterodimer of a large membrane-associated beta subunit and a small pyruvoyl-containing alpha subunit. Pyruvate serves as cofactor. Is synthesized initially as an inactive proenzyme. Formation of the active enzyme involves a self-maturation process in which the active site pyruvoyl group is generated from an internal serine residue via an autocatalytic post-translational modification. Two non-identical subunits are generated from the proenzyme in this reaction, and the pyruvate is formed at the N-terminus of the alpha chain, which is derived from the carboxyl end of the proenzyme. The autoendoproteolytic cleavage occurs by a canonical serine protease mechanism, in which the side chain hydroxyl group of the serine supplies its oxygen atom to form the C-terminus of the beta chain, while the remainder of the serine residue undergoes an oxidative deamination to produce ammonia and the pyruvoyl prosthetic group on the alpha chain. During this reaction, the Ser that is part of the protease active site of the proenzyme becomes the pyruvoyl prosthetic group, which constitutes an essential element of the active site of the mature decarboxylase.

It localises to the cell membrane. It carries out the reaction a 1,2-diacyl-sn-glycero-3-phospho-L-serine + H(+) = a 1,2-diacyl-sn-glycero-3-phosphoethanolamine + CO2. Its pathway is phospholipid metabolism; phosphatidylethanolamine biosynthesis; phosphatidylethanolamine from CDP-diacylglycerol: step 2/2. Functionally, catalyzes the formation of phosphatidylethanolamine (PtdEtn) from phosphatidylserine (PtdSer). This chain is Phosphatidylserine decarboxylase proenzyme, found in Shewanella putrefaciens (strain CN-32 / ATCC BAA-453).